Reading from the N-terminus, the 718-residue chain is Serine/threonine-protein kinase tousled-like 2 (718 aa).

Residues 24 to 85 (GVSKGPLNSE…KGTPRGHKIS (62 aa)) form a disordered region. A compositionally biased stretch (polar residues) spans 29-44 (PLNSESSNQSLCSVGS). The segment covering 46 to 61 (SDKEVETPEKKQNDQR) has biased composition (basic and acidic residues). A phosphoserine mark is found at S73, Q94, L99, and S102. The tract at residues 147 to 176 (QQNSPSSTGSGNTEHSCSSQKQISIQHRQT) is disordered. Residues 193-244 (NSDLEKKEGRIDDLLRANCDLRRQIDEQQKMLEKYKERLNRCVTMSKKLLIE) form a required for interaction with TLK1 and DYNLL1/LC8 region. Coiled-coil stretches lie at residues 193–244 (NSDL…LLIE), 285–315 (AFQN…KRKP), and 349–397 (HEQE…DNSQ). The tract at residues 310–337 (LAKRKPPAMGQAPPATNEQKQRKSKTNG) is disordered. Residues 408-687 (YLLLHLLGRG…VQQLACDPYL (280 aa)) form the Protein kinase domain. Residues 414–422 (LGRGGFSEV) and K437 each bind ATP. D538 functions as the Proton acceptor in the catalytic mechanism. The residue at position 696 (S696) is a Phosphoserine; by CHEK1.

Belongs to the protein kinase superfamily. Ser/Thr protein kinase family. Monomer. May form homodimers; homodimerization may enhance autophosphoylation and enzymatic activity. Heterodimer with TLK1. Interacts with YWHAZ; association with 14-3-3 proteins such as YWHAZ regulates subcellular location. May also interact with FEZ1/LZTS1 and FEZ2. Interacts with CHD7 and CHD8. Interacts with DYNLL1/LC8. Mg(2+) is required as a cofactor. Post-translationally, phosphorylated at Ser-696, probably by CHEK1. Autophosphorylated; phosphorylation promotes the assembly of higher order oligomers and enzymatic activity. Ubiquitously expressed in all tissues examined, with high levels in heart and testis, in particular the pachytene spermatocytes and in round spermatids. Some evidence for the existence of a testis-specific isoform suggesting a role in spermatogenesis.

The protein resides in the nucleus. Its subcellular location is the nucleoplasm. It localises to the cytoplasm. It is found in the perinuclear region. The protein localises to the cytoskeleton. The catalysed reaction is L-seryl-[protein] + ATP = O-phospho-L-seryl-[protein] + ADP + H(+). It carries out the reaction L-threonyl-[protein] + ATP = O-phospho-L-threonyl-[protein] + ADP + H(+). Cell cycle-regulated, with maximal activity in the S-phase. Rapidly and transiently inhibited by phosphorylation following the generation of DNA double-stranded breaks during S-phase, probably by CHEK1, possibly at Ser-696. This inhibition is cell cycle checkpoint- and ATM-dependent. Its function is as follows. Serine/threonine-protein kinase involved in the process of chromatin assembly and probably also DNA replication, transcription, repair, and chromosome segregation. Phosphorylates the chromatin assembly factors ASF1A and ASF1B. Phosphorylation of ASF1A prevents its proteasome-mediated degradation, thereby enhancing chromatin assembly. Negative regulator of amino acid starvation-induced autophagy. Testis-specific isoforms may play a role in spermatogenesis. Highly expressed in embryos throughout development. The polypeptide is Serine/threonine-protein kinase tousled-like 2 (Tlk2) (Mus musculus (Mouse)).